Reading from the N-terminus, the 222-residue chain is Pectate lyase A (222 aa).

The N-terminal stretch at 1-25 is a signal peptide; the sequence is MKKMLTLLLSAGLVASIFGVMPAAA.

Belongs to the polysaccharide lyase 3 family. It depends on Ca(2+) as a cofactor.

The protein resides in the secreted. The enzyme catalyses Eliminative cleavage of (1-&gt;4)-alpha-D-galacturonan to give oligosaccharides with 4-deoxy-alpha-D-galact-4-enuronosyl groups at their non-reducing ends.. It catalyses the reaction Eliminative cleavage of (1-&gt;4)-alpha-D-galacturonan methyl ester to give oligosaccharides with 4-deoxy-6-O-methyl-alpha-D-galact-4-enuronosyl groups at their non-reducing ends.. It participates in glycan metabolism; pectin degradation; 2-dehydro-3-deoxy-D-gluconate from pectin: step 2/5. Its activity is regulated as follows. Strongly inhibited by Ba(2+). To a lesser extent, is also inhibited by Sn(2+), Mg(2+) and Ag(+). Inhibited by EDTA in vitro. Functionally, catalyzes the depolymerization of both polygalacturonate and pectins of methyl esterification degree from 22 to 89%, with an endo mode of action. In contrast to the majority of pectate lyases, displays high activity on highly methylated pectins. Is not able to cleave trigalacturonate. Does not degrade xylans and carboxymethylcellulose (CMC). This Paenibacillus barcinonensis protein is Pectate lyase A (pelA).